A 68-amino-acid polypeptide reads, in one-letter code: Large ribosomal subunit protein uL29 (68 aa).

This sequence belongs to the universal ribosomal protein uL29 family.

In Limosilactobacillus reuteri (strain DSM 20016) (Lactobacillus reuteri), this protein is Large ribosomal subunit protein uL29.